Reading from the N-terminus, the 416-residue chain is Nuclear hormone receptor family member nhr-59 (416 aa).

The nuclear receptor DNA-binding region spans 17 to 94; the sequence is QTFCQVCGQE…IGMDIQNFQF (78 aa). 2 consecutive NR C4-type zinc fingers follow at residues 20-40 and 57-82; these read CQVC…CRAC and CKDG…LKKC. In terms of domain architecture, NR LBD spans 162–415; it reads TRLQKLSSSL…FSHPELVKDV (254 aa).

This sequence belongs to the nuclear hormone receptor family.

It is found in the nucleus. In terms of biological role, orphan nuclear receptor. In Caenorhabditis elegans, this protein is Nuclear hormone receptor family member nhr-59.